The following is a 57-amino-acid chain: Andropin (57 aa).

The N-terminal stretch at 1–23 (MKYFVVLVVLALILAITVGPSDA) is a signal peptide.

The protein belongs to the andropin family. In terms of tissue distribution, ejaculatory duct of adult males.

The protein resides in the secreted. Its function is as follows. Male-specific peptide with moderate activity against Gram-positive bacteria. The chain is Andropin (Anp) from Drosophila mauritiana (Fruit fly).